Reading from the N-terminus, the 317-residue chain is Methionyl-tRNA formyltransferase (317 aa).

110-113 is a (6S)-5,6,7,8-tetrahydrofolate binding site; the sequence is SLLP. The interval 292–317 is disordered; it reads RMKGEDFVRGKNVQPGDVLGEANEEN.

The protein belongs to the Fmt family.

It catalyses the reaction L-methionyl-tRNA(fMet) + (6R)-10-formyltetrahydrofolate = N-formyl-L-methionyl-tRNA(fMet) + (6S)-5,6,7,8-tetrahydrofolate + H(+). Attaches a formyl group to the free amino group of methionyl-tRNA(fMet). The formyl group appears to play a dual role in the initiator identity of N-formylmethionyl-tRNA by promoting its recognition by IF2 and preventing the misappropriation of this tRNA by the elongation apparatus. This chain is Methionyl-tRNA formyltransferase, found in Bacillus velezensis (strain DSM 23117 / BGSC 10A6 / LMG 26770 / FZB42) (Bacillus amyloliquefaciens subsp. plantarum).